Reading from the N-terminus, the 108-residue chain is UPF0102 protein Sden_0272 (108 aa).

Belongs to the UPF0102 family.

This chain is UPF0102 protein Sden_0272, found in Shewanella denitrificans (strain OS217 / ATCC BAA-1090 / DSM 15013).